A 381-amino-acid polypeptide reads, in one-letter code: Neuropeptide Y receptor type 2 (381 aa).

A disordered region spans residues 1 to 35 (MGPIGAEADENQTVEEMKVEQYGPQTTPRGELVPD). The Extracellular portion of the chain corresponds to 1–51 (MGPIGAEADENQTVEEMKVEQYGPQTTPRGELVPDPEPELIDSTKLIEVQV). Asparagine 11 carries an N-linked (GlcNAc...) asparagine glycan. The helical transmembrane segment at 52–72 (VLILAYCSIILLGVIGNSLVI) threads the bilayer. Residues 73 to 86 (HVVIKFKSMRTVTN) lie on the Cytoplasmic side of the membrane. A helical membrane pass occupies residues 87–107 (FFIANLAVADLLVNTLCLPFT). Topologically, residues 108–124 (LTYTLMGEWKMGPVLCH) are extracellular. An intrachain disulfide couples cysteine 123 to cysteine 203. A helical membrane pass occupies residues 125–145 (LVPYAQGLAVQVSTITLTVIA). Residues 146–165 (LDRHRCIVYHLESKISKRIS) are Cytoplasmic-facing. Residues 166 to 186 (FLIIGLAWGISALLASPLAIF) traverse the membrane as a helical segment. The Extracellular portion of the chain corresponds to 187 to 216 (REYSLIEIIPDFEIVACTEKWPGEEKSIYG). A helical membrane pass occupies residues 217–237 (TVYSLSSLLILYVLPLGIISF). Over 238 to 268 (SYTRIWSKLKNHVSPGAANDHYHQRRQKTTK) the chain is Cytoplasmic. The helical transmembrane segment at 269-289 (MLVCVVVVFAVSWLPLHAFQL) threads the bilayer. Residues 290-304 (AVDIDSQVLDLKEYK) lie on the Extracellular side of the membrane. Residues 305 to 325 (LIFTVFHIIAMCSTFANPLLY) form a helical membrane-spanning segment. The Cytoplasmic segment spans residues 326-381 (GWMNSNYRKAFLSAFRCEQRLDAIHSEVSVTFKAKKNLEVRKNSGPNDSFTEATNV). Cysteine 342 carries the S-palmitoyl cysteine lipid modification.

Belongs to the G-protein coupled receptor 1 family. High levels in amygdala, corpus callosum, hippocampus and subthalamic nucleus. Also detectable in caudate nucleus, hypothalamus and substantia nigra.

The protein localises to the cell membrane. Functionally, receptor for neuropeptide Y and peptide YY. The rank order of affinity of this receptor for pancreatic polypeptides is PYY &gt; NPY &gt; PYY (3-36) &gt; NPY (2-36) &gt; [Ile-31, Gln-34] PP &gt; [Leu-31, Pro-34] NPY &gt; PP, [Pro-34] PYY and NPY free acid. This is Neuropeptide Y receptor type 2 (NPY2R) from Homo sapiens (Human).